The chain runs to 84 residues: Small ribosomal subunit protein uS17 (84 aa).

This sequence belongs to the universal ribosomal protein uS17 family. Part of the 30S ribosomal subunit.

Functionally, one of the primary rRNA binding proteins, it binds specifically to the 5'-end of 16S ribosomal RNA. The polypeptide is Small ribosomal subunit protein uS17 (Shigella boydii serotype 18 (strain CDC 3083-94 / BS512)).